A 74-amino-acid polypeptide reads, in one-letter code: Antimicrobial peptide 2 (74 aa).

An N-terminal signal peptide occupies residues 1-22 (MEIKYLLTVFLVLLIVSDHCQA). The residue at position 40 (K40) is a Lysine amide. The propeptide occupies 46–74 (DLDGQIDRSRNFRKRDAELEELLSKLPIY).

Expressed by the venom gland.

The protein localises to the secreted. It localises to the target cell membrane. Functionally, has antibacterial activity against the Gram-positive bacteria S.aureus (MIC=48 uM), the Gram-negative bacteria E.coli (MIC=120 uM), and the yeast C.albicans (MIC=64 uM). Causes hemolysis on horse erythrocytes. This chain is Antimicrobial peptide 2, found in Androctonus amoreuxi (African fattail scorpion).